A 256-amino-acid chain; its full sequence is Nuclear shuttle protein (256 aa).

Positions Met1–Gly16 are enriched in polar residues. Residues Met1–Gln46 are disordered. Positions Arg21–Val42 match the Bipartite nuclear localization signal motif. A Nuclear localization signal motif is present at residues Ser81–Leu96. The interaction with Arabidopsis thaliana NSI protein stretch occupies residues Glu150–Asp187. The Nuclear export signal motif lies at Val177 to Gln198.

This sequence belongs to the begomovirus nuclear shuttle protein family. In terms of assembly, binds to single-stranded and double-stranded viral DNA. Interacts with the host nuclear shuttle interacting (NSI) protein. This interaction may allow NSP to recruit NSI monomers to the viral genome and thus regulate nuclear export of viral genome by NSP.

It is found in the host nucleus. The protein localises to the host cytoplasm. The protein resides in the host cell membrane. Its function is as follows. Binds to the genomic viral ssDNA, shuttles it into and out of the cell nucleus. Begomoviruses use 2 proteins to transport their DNA from cell to cell. The nuclear shuttle protein (NSP) shuttles it between nucleus and cytoplasm and the movement protein (MP) probably transports the DNA-NSP complex to the cell periphery and facilitates movement across the cell wall. The chain is Nuclear shuttle protein from Squash leaf curl virus (SLCV).